Consider the following 154-residue polypeptide: Putative pre-16S rRNA nuclease (154 aa).

The protein belongs to the YqgF nuclease family.

It is found in the cytoplasm. Functionally, could be a nuclease involved in processing of the 5'-end of pre-16S rRNA. This is Putative pre-16S rRNA nuclease from Rickettsia conorii (strain ATCC VR-613 / Malish 7).